The primary structure comprises 97 residues: Co-chaperonin GroES (97 aa).

The protein belongs to the GroES chaperonin family. As to quaternary structure, heptamer of 7 subunits arranged in a ring. Interacts with the chaperonin GroEL.

The protein localises to the cytoplasm. Its function is as follows. Together with the chaperonin GroEL, plays an essential role in assisting protein folding. The GroEL-GroES system forms a nano-cage that allows encapsulation of the non-native substrate proteins and provides a physical environment optimized to promote and accelerate protein folding. GroES binds to the apical surface of the GroEL ring, thereby capping the opening of the GroEL channel. This chain is Co-chaperonin GroES, found in Klebsiella aerogenes (Enterobacter aerogenes).